A 244-amino-acid chain; its full sequence is Ribonuclease PH (244 aa).

Phosphate contacts are provided by residues R90 and 128–130; that span reads GTR.

This sequence belongs to the RNase PH family. Homohexameric ring arranged as a trimer of dimers.

It catalyses the reaction tRNA(n+1) + phosphate = tRNA(n) + a ribonucleoside 5'-diphosphate. Phosphorolytic 3'-5' exoribonuclease that plays an important role in tRNA 3'-end maturation. Removes nucleotide residues following the 3'-CCA terminus of tRNAs; can also add nucleotides to the ends of RNA molecules by using nucleoside diphosphates as substrates, but this may not be physiologically important. Probably plays a role in initiation of 16S rRNA degradation (leading to ribosome degradation) during starvation. The protein is Ribonuclease PH of Cutibacterium acnes (strain DSM 16379 / KPA171202) (Propionibacterium acnes).